The sequence spans 66 residues: Large ribosomal subunit protein bL31 (66 aa).

4 residues coordinate Zn(2+): C16, C18, C36, and C39.

This sequence belongs to the bacterial ribosomal protein bL31 family. Type A subfamily. As to quaternary structure, part of the 50S ribosomal subunit. Zn(2+) serves as cofactor.

Functionally, binds the 23S rRNA. This Moorella thermoacetica (strain ATCC 39073 / JCM 9320) protein is Large ribosomal subunit protein bL31.